Consider the following 814-residue polypeptide: Exostosin-like-3 homolog (814 aa).

Residues 1 to 14 are Cytoplasmic-facing; sequence MAIKLNGSSRSFVP. Residues 15-35 form a helical; Signal-anchor for type II membrane protein membrane-spanning segment; that stretch reads SLRVSAFLIFIFFVITYIIIY. N-linked (GlcNAc...) asparagine glycosylation is found at N36, N227, N297, N322, N454, and N492. At 36–814 the chain is on the lumenal side; sequence NVSFSEPSWI…QNHQKCFKYV (779 aa). UDP-N-acetyl-alpha-D-glucosamine-binding residues include R570, N595, N620, R625, D641, D642, and D643. D643 contacts Mn(2+). The N-linked (GlcNAc...) asparagine glycan is linked to N685. A disulfide bridge links C726 with C774. UDP-N-acetyl-alpha-D-glucosamine is bound by residues E727, D728, and R771. D728 is an active-site residue.

Belongs to the glycosyltransferase 47 family. In terms of assembly, interacts with rib-1. Requires Mn(2+) as cofactor.

Its subcellular location is the endoplasmic reticulum membrane. The protein localises to the golgi apparatus membrane. It catalyses the reaction 3-O-(beta-D-GlcA-(1-&gt;3)-beta-D-Gal-(1-&gt;3)-beta-D-Gal-(1-&gt;4)-beta-D-Xyl)-L-seryl-[protein] + UDP-N-acetyl-alpha-D-glucosamine = 3-O-(alpha-D-GlcNAc-(1-&gt;4)-beta-D-GlcA-(1-&gt;3)-beta-D-Gal-(1-&gt;3)-beta-D-Gal-(1-&gt;4)-beta-D-Xyl)-L-seryl-[protein] + UDP + H(+). It carries out the reaction 3-O-{[(1-&gt;4)-beta-D-GlcA-(1-&gt;4)-alpha-D-GlcNAc](n)-(1-&gt;4)-beta-D-GlcA-(1-&gt;3)-beta-D-Gal-(1-&gt;3)-beta-D-Gal-(1-&gt;4)-beta-D-Xyl}-L-seryl-[protein] + UDP-N-acetyl-alpha-D-glucosamine = 3-O-{alpha-D-GlcNAc-[(1-&gt;4)-beta-D-GlcA-(1-&gt;4)-alpha-D-GlcNAc](n)-(1-&gt;4)-beta-D-GlcA-(1-&gt;3)-beta-D-Gal-(1-&gt;3)-beta-D-Gal-(1-&gt;4)-beta-D-Xyl}-L-seryl-[protein] + UDP + H(+). The catalysed reaction is 3-O-{alpha-D-GlcNAc-[(1-&gt;4)-beta-D-GlcA-(1-&gt;4)-alpha-D-GlcNAc](n)-(1-&gt;4)-beta-D-GlcA-(1-&gt;3)-beta-D-Gal-(1-&gt;3)-beta-D-Gal-(1-&gt;4)-beta-D-Xyl}-L-seryl-[protein] + UDP-alpha-D-glucuronate = 3-O-{[(1-&gt;4)-beta-D-GlcA-(1-&gt;4)-alpha-D-GlcNAc](n+1)-(1-&gt;4)-beta-D-GlcA-(1-&gt;3)-beta-D-Gal-(1-&gt;3)-beta-D-Gal-(1-&gt;4)-beta-D-Xyl}-L-seryl-[protein] + UDP + H(+). It participates in glycan metabolism; heparan sulfate biosynthesis. Binding to rib-1 is required for GlcAT-II activity and for increasing GlcNAc-II activity in vitro. Functionally, glycosyltransferase required for the biosynthesis of heparan sulfate. Initiates heparan sulfate synthesis by transferring GlcNAc to the (GlcA-Gal-Gal-Xyl-)Ser core linker (GlcNAcT-I activity). In association with rib-1, is also responsible for the alternating addition of beta-1-4-linked glucuronic acid (GlcA) and alpha-1-4-linked N-acetylglucosamine (GlcNAc) units to nascent heparan sulfate chains (GlcNAcT-II and GlcAT-II activities). Required for normal ventral epidermal enclosure during the early stages of embryonic development. In addition, involved in the elongation of the pharyngeal isthmus during the later stages of embryonic development. Involved in the directed migration of hermaphrodite-specific neurons. The protein is Exostosin-like-3 homolog (rib-2) of Caenorhabditis elegans.